An 84-amino-acid chain; its full sequence is Small ribosomal subunit protein eS27-like (84 aa).

Positions 1–16 (MPLARDLLHPSLDEEK) are enriched in basic and acidic residues. The tract at residues 1–23 (MPLARDLLHPSLDEEKKKHKKKR) is disordered. The C4-type zinc finger occupies 38-60 (PGCYKITTVFSHAQTVVLCVGCS).

The protein belongs to the eukaryotic ribosomal protein eS27 family. Requires Zn(2+) as cofactor.

This chain is Small ribosomal subunit protein eS27-like (RPS27L), found in Bos taurus (Bovine).